The sequence spans 298 residues: Iron/alpha-ketoglutarate-dependent dioxygenase ausO (298 aa).

H130, D132, and H211 together coordinate Fe cation.

Belongs to the PhyH family. Homodimer. It depends on Fe cation as a cofactor.

It participates in secondary metabolite biosynthesis; terpenoid biosynthesis. In terms of biological role, iron/alpha-ketoglutarate-dependent dioxygenase; part of the gene cluster that mediates the biosynthesis of calidodehydroaustin, a fungal meroterpenoid. The first step of the pathway is the synthesis of 3,5-dimethylorsellinic acid by the polyketide synthase ausA. 3,5-dimethylorsellinic acid is then prenylated by the polyprenyl transferase ausN. Further epoxidation by the FAD-dependent monooxygenase ausM and cyclization by the probable terpene cyclase ausL lead to the formation of protoaustinoid A. Protoaustinoid A is then oxidized to spiro-lactone preaustinoid A3 by the combined action of the FAD-binding monooxygenases ausB and ausC, and the dioxygenase ausE. Acid-catalyzed keto-rearrangement and ring contraction of the tetraketide portion of preaustinoid A3 by ausJ lead to the formation of preaustinoid A4. The aldo-keto reductase ausK, with the help of ausH, is involved in the next step by transforming preaustinoid A4 into isoaustinone which is in turn hydroxylated by the P450 monooxygenase ausI to form austinolide. The cytochrome P450 monooxygenase ausG modifies austinolide to austinol. Austinol is further acetylated to austin by the O-acetyltransferase ausP, which spontaneously changes to dehydroaustin. The cytochrome P450 monooxygenase ausR then converts dehydroaustin is into 7-dehydrodehydroaustin. The hydroxylation catalyzed by ausR permits the O-acetyltransferase ausQ to add an additional acetyl group to the molecule, leading to the formation of acetoxydehydroaustin. The short chain dehydrogenase ausT catalyzes the reduction of the double bond present between carbon atoms 1 and 2 to convert 7-dehydrodehydroaustin into 1,2-dihydro-7-hydroxydehydroaustin. AusQ catalyzes not only an acetylation reaction but also the addition of the PKS ausV diketide product to 1,2-dihydro-7-hydroxydehydroaustin, forming precalidodehydroaustin. Finally, the iron/alpha-ketoglutarate-dependent dioxygenase converts precalidodehydroaustin into calidodehydroaustin. This Aspergillus calidoustus protein is Iron/alpha-ketoglutarate-dependent dioxygenase ausO.